We begin with the raw amino-acid sequence, 130 residues long: Small ribosomal subunit protein uS9 (130 aa).

Belongs to the universal ribosomal protein uS9 family.

This is Small ribosomal subunit protein uS9 from Teredinibacter turnerae (strain ATCC 39867 / T7901).